Here is a 123-residue protein sequence, read N- to C-terminus: Small ribosomal subunit protein uS12 (123 aa).

A 3-methylthioaspartic acid modification is found at D89. Residues 100 to 123 (GSLDTSGVSDRKQGRSKYGTKRPK) are disordered. Positions 113-123 (GRSKYGTKRPK) are enriched in basic residues.

This sequence belongs to the universal ribosomal protein uS12 family. In terms of assembly, part of the 30S ribosomal subunit. Contacts proteins S8 and S17. May interact with IF1 in the 30S initiation complex.

Functionally, with S4 and S5 plays an important role in translational accuracy. Interacts with and stabilizes bases of the 16S rRNA that are involved in tRNA selection in the A site and with the mRNA backbone. Located at the interface of the 30S and 50S subunits, it traverses the body of the 30S subunit contacting proteins on the other side and probably holding the rRNA structure together. The combined cluster of proteins S8, S12 and S17 appears to hold together the shoulder and platform of the 30S subunit. In Saccharophagus degradans (strain 2-40 / ATCC 43961 / DSM 17024), this protein is Small ribosomal subunit protein uS12.